The chain runs to 209 residues: Thiamine-phosphate synthase 1 (209 aa).

4-amino-2-methyl-5-(diphosphooxymethyl)pyrimidine-binding positions include 39-43 (QFREK) and Asn74. Mg(2+) is bound by residues Asp75 and Asp94. Ser112 contributes to the 4-amino-2-methyl-5-(diphosphooxymethyl)pyrimidine binding site. 2-[(2R,5Z)-2-carboxy-4-methylthiazol-5(2H)-ylidene]ethyl phosphate is bound at residue 138–140 (TQS). Lys141 lines the 4-amino-2-methyl-5-(diphosphooxymethyl)pyrimidine pocket. Residues Gly170 and 190 to 191 (IS) each bind 2-[(2R,5Z)-2-carboxy-4-methylthiazol-5(2H)-ylidene]ethyl phosphate.

The protein belongs to the thiamine-phosphate synthase family. The cofactor is Mg(2+).

The enzyme catalyses 2-[(2R,5Z)-2-carboxy-4-methylthiazol-5(2H)-ylidene]ethyl phosphate + 4-amino-2-methyl-5-(diphosphooxymethyl)pyrimidine + 2 H(+) = thiamine phosphate + CO2 + diphosphate. It catalyses the reaction 2-(2-carboxy-4-methylthiazol-5-yl)ethyl phosphate + 4-amino-2-methyl-5-(diphosphooxymethyl)pyrimidine + 2 H(+) = thiamine phosphate + CO2 + diphosphate. It carries out the reaction 4-methyl-5-(2-phosphooxyethyl)-thiazole + 4-amino-2-methyl-5-(diphosphooxymethyl)pyrimidine + H(+) = thiamine phosphate + diphosphate. It functions in the pathway cofactor biosynthesis; thiamine diphosphate biosynthesis; thiamine phosphate from 4-amino-2-methyl-5-diphosphomethylpyrimidine and 4-methyl-5-(2-phosphoethyl)-thiazole: step 1/1. In terms of biological role, condenses 4-methyl-5-(beta-hydroxyethyl)thiazole monophosphate (THZ-P) and 2-methyl-4-amino-5-hydroxymethyl pyrimidine pyrophosphate (HMP-PP) to form thiamine monophosphate (TMP). In Streptococcus pneumoniae serotype 4 (strain ATCC BAA-334 / TIGR4), this protein is Thiamine-phosphate synthase 1.